Reading from the N-terminus, the 74-residue chain is Antimicrobial peptide AcrAP1 (74 aa).

Residues 1–22 (MEIKYLLTVFLVLLIVSDHCQA) form the signal peptide. Lysine 40 is subject to Lysine amide. The propeptide occupies 46–74 (DLDGQIDRFRNFRKRDAELEELLSKLPIY).

The protein belongs to the non-disulfide-bridged peptide (NDBP) superfamily. Short antimicrobial peptide (group 4) family. As to expression, expressed by the venom gland.

Its subcellular location is the secreted. The protein resides in the target cell membrane. Functionally, has antimicrobial activity against the Gram-positive bacteria S.aureus (MIC=8 uM) and the yeast C.albicans (MIC=16 uM). Causes hemolysis on horse erythrocytes (64 uM for 100% hemolysis). Minimum bactericidal concentrations have also been tested against S.aureus and is four-fold higher (MBC=32 uM). The polypeptide is Antimicrobial peptide AcrAP1 (Androctonus crassicauda (Arabian fat-tailed scorpion)).